The chain runs to 485 residues: Glutamyl-tRNA(Gln) amidotransferase subunit A (485 aa).

Active-site charge relay system residues include Lys78 and Ser153. Catalysis depends on Ser177, which acts as the Acyl-ester intermediate.

The protein belongs to the amidase family. GatA subfamily. In terms of assembly, heterotrimer of A, B and C subunits.

The enzyme catalyses L-glutamyl-tRNA(Gln) + L-glutamine + ATP + H2O = L-glutaminyl-tRNA(Gln) + L-glutamate + ADP + phosphate + H(+). Functionally, allows the formation of correctly charged Gln-tRNA(Gln) through the transamidation of misacylated Glu-tRNA(Gln) in organisms which lack glutaminyl-tRNA synthetase. The reaction takes place in the presence of glutamine and ATP through an activated gamma-phospho-Glu-tRNA(Gln). This chain is Glutamyl-tRNA(Gln) amidotransferase subunit A, found in Geobacter metallireducens (strain ATCC 53774 / DSM 7210 / GS-15).